The chain runs to 562 residues: Protein KASH5 (562 aa).

At 1–521 (MDLPEGPVGG…PQRLRVTRHP (521 aa)) the chain is on the cytoplasmic side. Residues 125-153 (ALTSRQLPSGCPEAEEPANLESFGGEDPR) form a disordered region. Residues 164 to 349 (SSLEDLELSN…LEEQLSQTYE (186 aa)) adopt a coiled-coil conformation. The tract at residues 407–481 (ETSEETEFPS…DIPENPPERP (75 aa)) is disordered. Basic and acidic residues predominate over residues 431–448 (AHPEEGRKEPSMWLTRRE). A helical; Anchor for type IV membrane protein transmembrane segment spans residues 522-542 (LIPAPVLGLLLLLLLSVLLLG). The tract at residues 541–562 (LGPSPPPTWPHLQLCYLQPPPV) is interaction with SUN1. Over 543–562 (PSPPPTWPHLQLCYLQPPPV) the chain is Perinuclear space.

In terms of assembly, core component the LINC complex which is composed of inner nuclear membrane SUN domain-containing proteins coupled to outer nuclear membrane KASH domain-containing nesprins. SUN and KASH domain-containing proteins seem to bind each other promiscuously; however, differentially expression of LINC complex constituents is giving rise to specific assemblies. At least SUN1/2-containing core LINC complexes are proposed to be hexameric composed of three protomers of each KASH and SUN domain-containing protein. Interacts with SUN1; this interaction mediates its telomere localization by forming a SUN1:KASH5 LINC complex. Component of a probable SUN2:KASH5 LINC complex. Self-associates. Interacts with DYNC1H1, DCTN1, DYNC1I1/2 and PAFAH1B1; suggesting the association with the dynein-dynactin motor complex. As to expression, expressed in testis (at protein level).

Its subcellular location is the nucleus outer membrane. It is found in the nucleus. The protein resides in the chromosome. It localises to the telomere. The protein localises to the nucleus envelope. In terms of biological role, as a component of the LINC (LInker of Nucleoskeleton and Cytoskeleton) complex, involved in the connection between the nuclear lamina and the cytoskeleton. The nucleocytoplasmic interactions established by the LINC complex play an important role in the transmission of mechanical forces across the nuclear envelope and in nuclear movement and positioning. Required for telomere attachment to nuclear envelope in the prophase of meiosis. Required for rapid telomere prophase movements implicating a SUN1/2:KASH5 LINC complex in which SUN1 and SUN2 seem to act at least partial redundantly. Required for homolog pairing during meiotic prophase in spermatocytes and probably oocytes. Essential for male and female gametogenesis. Recruits cytoplasmic dynein to telomere attachment sites at the nuclear envelope in spermatocytes. In oocytes is involved in meiotic resumption and spindle formation. The chain is Protein KASH5 from Homo sapiens (Human).